Reading from the N-terminus, the 265-residue chain is Non-seed lectin (265 aa).

A signal peptide (or 23) is located at residues 1–21; the sequence is MALYRTKELVSLVSIMFVLLA. N-linked (GlcNAc...) asparagine glycosylation is found at N59 and N127.

This sequence belongs to the leguminous lectin family. In terms of assembly, monomer. In terms of tissue distribution, most highly expressed in the epidermal layer of developing shoot tips.

In Pisum sativum (Garden pea), this protein is Non-seed lectin.